The sequence spans 270 residues: Glutamate racemase (270 aa).

Residues 7–8 and 39–40 contribute to the substrate site; these read DS and YG. C70 serves as the catalytic Proton donor/acceptor. 71–72 contacts substrate; the sequence is NT. Residue C194 is the Proton donor/acceptor of the active site. 195–196 provides a ligand contact to substrate; sequence TH.

The protein belongs to the aspartate/glutamate racemases family.

It carries out the reaction L-glutamate = D-glutamate. Its pathway is cell wall biogenesis; peptidoglycan biosynthesis. Its function is as follows. Provides the (R)-glutamate required for cell wall biosynthesis. In Paracoccus denitrificans (strain Pd 1222), this protein is Glutamate racemase.